Here is a 377-residue protein sequence, read N- to C-terminus: D-alanine--D-alanine ligase (377 aa).

The region spanning 141–347 is the ATP-grasp domain; sequence KRILNQAGIR…YSELIDRLIQ (207 aa). ATP is bound at residue 171-226; sequence KEELGDLVFVKPAKQGSSVGIHKVDTEEEYETAMKDAFTYDYKVLVEAGIKNPREI. Residues Asp301, Glu314, and Asn316 each contribute to the Mg(2+) site.

This sequence belongs to the D-alanine--D-alanine ligase family. Mg(2+) serves as cofactor. The cofactor is Mn(2+).

It localises to the cytoplasm. It catalyses the reaction 2 D-alanine + ATP = D-alanyl-D-alanine + ADP + phosphate + H(+). It participates in cell wall biogenesis; peptidoglycan biosynthesis. Cell wall formation. The polypeptide is D-alanine--D-alanine ligase (Limosilactobacillus fermentum (strain NBRC 3956 / LMG 18251) (Lactobacillus fermentum)).